The primary structure comprises 434 residues: V-type ATP synthase beta chain (434 aa).

The protein belongs to the ATPase alpha/beta chains family.

Functionally, produces ATP from ADP in the presence of a proton gradient across the membrane. The V-type beta chain is a regulatory subunit. This Borreliella afzelii (strain PKo) (Borrelia afzelii) protein is V-type ATP synthase beta chain.